The following is a 780-amino-acid chain: Aconitate hydratase, mitochondrial (780 aa).

The transit peptide at 1–27 (MAPYSLLVTRLQKALGVRQYHVASVLC) directs the protein to the mitochondrion. Position 31 is an N6-succinyllysine (lysine 31). Lysine 50 carries the N6-acetyllysine; alternate modification. At lysine 50 the chain carries N6-succinyllysine; alternate. Glutamine 99 provides a ligand contact to substrate. Lysine 138 and lysine 144 each carry N6-acetyllysine; alternate. Residues lysine 138 and lysine 144 each carry the N6-succinyllysine; alternate modification. 192 to 194 (DSH) is a binding site for substrate. Lysine 233 carries the N6-acetyllysine; alternate modification. Lysine 233 bears the N6-succinyllysine; alternate mark. Cysteine 385 provides a ligand contact to [4Fe-4S] cluster. An N6-succinyllysine modification is found at lysine 411. [4Fe-4S] cluster contacts are provided by cysteine 448 and cysteine 451. Residues arginine 474 and arginine 479 each coordinate substrate. Over residues 528–537 (DADELPKGEF) the composition is skewed to basic and acidic residues. The disordered stretch occupies residues 528-560 (DADELPKGEFDPGQDTYQHPPKDSSGQHVDVSP). Lysine 549 is subject to N6-succinyllysine. Residues 551–560 (SSGQHVDVSP) show a composition bias toward polar residues. Serine 559 carries the phosphoserine modification. Lysine 573 is modified (N6-acetyllysine; alternate). Lysine 573 bears the N6-succinyllysine; alternate mark. An N6-succinyllysine mark is found at lysine 577 and lysine 591. Lysine 605 is modified (N6-acetyllysine; alternate). The residue at position 605 (lysine 605) is an N6-succinyllysine; alternate. Residue arginine 607 coordinates substrate. Lysine 628 carries the post-translational modification N6-succinyllysine. The residue at position 670 (serine 670) is a Phosphoserine. Residue 670–671 (SR) participates in substrate binding. At lysine 689 the chain carries N6-succinyllysine. An N6-acetyllysine; alternate mark is found at lysine 723 and lysine 730. N6-succinyllysine; alternate occurs at positions 723 and 730. Lysine 736, lysine 739, and lysine 743 each carry N6-acetyllysine.

It belongs to the aconitase/IPM isomerase family. As to quaternary structure, monomer. The cofactor is [4Fe-4S] cluster. Post-translationally, forms covalent cross-links mediated by transglutaminase TGM2, between a glutamine and the epsilon-amino group of a lysine residue, forming homopolymers and heteropolymers.

The protein resides in the mitochondrion. It carries out the reaction citrate = D-threo-isocitrate. It functions in the pathway carbohydrate metabolism; tricarboxylic acid cycle; isocitrate from oxaloacetate: step 2/2. Functionally, catalyzes the isomerization of citrate to isocitrate via cis-aconitate. In Homo sapiens (Human), this protein is Aconitate hydratase, mitochondrial (ACO2).